The primary structure comprises 461 residues: Glycolipid 2-alpha-mannosyltransferase 2 (461 aa).

Over 1–12 (MKPSIFYSSRQP) the chain is Cytoplasmic. A helical; Signal-anchor for type II membrane protein membrane pass occupies residues 13-35 (YLKYLAIILTTITIYVLTHSSYS). Residues 35 to 52 (SADPNINDVTTKPISETV) show a composition bias toward polar residues. Positions 35 to 138 (SADPNINDVT…SSSKDPVKPE (104 aa)) are disordered. The Lumenal portion of the chain corresponds to 36–461 (ADPNINDVTT…QKPKEWEKYQ (426 aa)). 2 stretches are compositionally biased toward low complexity: residues 61 to 70 (SSPEQQQQQP) and 106 to 116 (PKSSSSSPQQQ). The span at 117-126 (EKQDTKKESE) shows a compositional bias: basic and acidic residues. E349 serves as the catalytic Nucleophile.

Belongs to the glycosyltransferase 15 family.

It localises to the golgi apparatus membrane. Functionally, involved in O-glycosylation of cell wall and secreted proteins. Transfers an alpha-D-mannosyl residue from GDP-mannose into lipid-linked oligosaccharide, forming an alpha-(1-&gt;2)-D-mannosyl-D-mannose linkage. Mainly responsible for the addition of the third mannose residue in an O-linked mannose pentamer. Can also substitute for MNT1 by adding the second mannose residue. Important for adherence to host surfaces and for virulence. This is Glycolipid 2-alpha-mannosyltransferase 2 (MNT2) from Candida albicans (strain SC5314 / ATCC MYA-2876) (Yeast).